A 759-amino-acid chain; its full sequence is Glucosylceramidase (759 aa).

Catalysis depends on Glu-247, which acts as the Proton donor. Glu-497 acts as the Nucleophile in catalysis. The tract at residues 576 to 600 (AFENESQRDPQSPAYSESQRNTESY) is disordered. A compositionally biased stretch (polar residues) spans 584–599 (DPQSPAYSESQRNTES).

This sequence belongs to the glycosyl hydrolase 5 (cellulase A) family.

Its subcellular location is the membrane. The enzyme catalyses a beta-D-glucosyl-(1&lt;-&gt;1')-N-acylsphing-4-enine + H2O = an N-acylsphing-4-enine + D-glucose. In terms of biological role, specifically hydrolyzes the glucosidic linkage in glucosylceramide. May prevent accumulation of aberrent glucosylceramide containing immature ceramide. This Aspergillus fumigatus (Neosartorya fumigata) protein is Glucosylceramidase.